A 37-amino-acid polypeptide reads, in one-letter code: Large ribosomal subunit protein bL36 (37 aa).

It belongs to the bacterial ribosomal protein bL36 family.

The sequence is that of Large ribosomal subunit protein bL36 from Caldicellulosiruptor saccharolyticus (strain ATCC 43494 / DSM 8903 / Tp8T 6331).